Reading from the N-terminus, the 1191-residue chain is Rho GTPase-activating protein 20 (1191 aa).

Residues 1–23 (MEAMSPQQETLGGQPGRSSSLTG) show a composition bias toward polar residues. A disordered region spans residues 1-45 (MEAMSPQQETLGGQPGRSSSLTGVSRLAGGSCTKKKMKTLAERRR). Residue S46 is modified to Phosphoserine. Residues 78–180 (SLVCSNRTLL…EQKDKWLSLL (103 aa)) enclose the PH domain. A Ras-associating domain is found at 194-295 (KSIPLKIFAK…TPFNLQEPFL (102 aa)). The 187-residue stretch at 365-551 (ISLPNICEND…FLIENCLRIF (187 aa)) folds into the Rho-GAP domain. 2 positions are modified to phosphoserine: S704 and S730. 4 disordered regions span residues 768 to 791 (SKKNATTQNTKKKSLSGSEGNHVK), 926 to 1014 (RLNL…SRPA), 1052 to 1123 (KKAK…RHCS), and 1140 to 1191 (HEEI…TKDI). Residues 934–961 (SYSSLSSPGTSPSGSSVSSQDSAFSQIS) show a composition bias toward low complexity. Composition is skewed to polar residues over residues 962–981 (EHSVFTPTETSSPIDCTFQA) and 1103–1116 (PVQSAQRCSSSPFQ). The span at 1182 to 1191 (IEDRYLTKDI) shows a compositional bias: basic and acidic residues.

As to expression, expressed predominantly in the brain. Lower expression is found in lymph nodes.

GTPase activator for the Rho-type GTPases by converting them to an inactive GDP-bound state. The chain is Rho GTPase-activating protein 20 (ARHGAP20) from Homo sapiens (Human).